The chain runs to 692 residues: Elongation factor G (692 aa).

Residues 8-282 form the tr-type G domain; that stretch reads ENTRNIGIMA…AVIDYLPSPL (275 aa). Residues 17–24, 81–85, and 135–138 each bind GTP; these read AHIDAGKT, DTPGH, and NKMD.

This sequence belongs to the TRAFAC class translation factor GTPase superfamily. Classic translation factor GTPase family. EF-G/EF-2 subfamily.

The protein localises to the cytoplasm. Functionally, catalyzes the GTP-dependent ribosomal translocation step during translation elongation. During this step, the ribosome changes from the pre-translocational (PRE) to the post-translocational (POST) state as the newly formed A-site-bound peptidyl-tRNA and P-site-bound deacylated tRNA move to the P and E sites, respectively. Catalyzes the coordinated movement of the two tRNA molecules, the mRNA and conformational changes in the ribosome. This Bacillus cereus (strain G9842) protein is Elongation factor G.